We begin with the raw amino-acid sequence, 53 residues long: Metallothionein (53 aa).

It belongs to the metallothionein superfamily. Type 14 family.

Functionally, this protein complexes cadmium, zinc and copper. This is Metallothionein from Synechococcus sp.